An 83-amino-acid polypeptide reads, in one-letter code: Three-finger toxin MALT0058C (83 aa).

The N-terminal stretch at 1-21 (MKTLLLTLVVVTIVCLDFGHT) is a signal peptide. Cystine bridges form between C24/C45, C38/C62, C64/C75, and C76/C81.

This sequence belongs to the three-finger toxin family. Short-chain subfamily. Type I alpha-neurotoxin sub-subfamily. Expressed by the venom gland.

The protein localises to the secreted. Binds to muscle nicotinic acetylcholine receptor (nAChR) and inhibits acetylcholine from binding to the receptor, thereby impairing neuromuscular transmission. This is Three-finger toxin MALT0058C from Micrurus altirostris (Uruguayan coral snake).